The primary structure comprises 379 residues: Bifunctional enzyme IspD/IspF (379 aa).

Residues 1-213 form a 2-C-methyl-D-erythritol 4-phosphate cytidylyltransferase region; that stretch reads MSQVSLVVMG…QGFEPPFGGC (213 aa). The segment at 214-379 is 2-C-methyl-D-erythritol 2,4-cyclodiphosphate synthase; it reads YGGSGFDVHA…DWTKHACFNR (166 aa). Aspartate 220 and histidine 222 together coordinate a divalent metal cation. 4-CDP-2-C-methyl-D-erythritol 2-phosphate contacts are provided by residues 220–222 and 246–247; these read DVH and HS. Histidine 254 provides a ligand contact to a divalent metal cation. Residues 268 to 270, 273 to 277, 344 to 347, phenylalanine 351, and arginine 354 each bind 4-CDP-2-C-methyl-D-erythritol 2-phosphate; these read DIG, FPDSD, and TTTE.

In the N-terminal section; belongs to the IspD/TarI cytidylyltransferase family. IspD subfamily. It in the C-terminal section; belongs to the IspF family. Requires a divalent metal cation as cofactor.

The enzyme catalyses 2-C-methyl-D-erythritol 4-phosphate + CTP + H(+) = 4-CDP-2-C-methyl-D-erythritol + diphosphate. It carries out the reaction 4-CDP-2-C-methyl-D-erythritol 2-phosphate = 2-C-methyl-D-erythritol 2,4-cyclic diphosphate + CMP. It participates in isoprenoid biosynthesis; isopentenyl diphosphate biosynthesis via DXP pathway; isopentenyl diphosphate from 1-deoxy-D-xylulose 5-phosphate: step 2/6. Its pathway is isoprenoid biosynthesis; isopentenyl diphosphate biosynthesis via DXP pathway; isopentenyl diphosphate from 1-deoxy-D-xylulose 5-phosphate: step 4/6. Functionally, bifunctional enzyme that catalyzes the formation of 4-diphosphocytidyl-2-C-methyl-D-erythritol from CTP and 2-C-methyl-D-erythritol 4-phosphate (MEP) (IspD), and catalyzes the conversion of 4-diphosphocytidyl-2-C-methyl-D-erythritol 2-phosphate (CDP-ME2P) to 2-C-methyl-D-erythritol 2,4-cyclodiphosphate (ME-CPP) with a corresponding release of cytidine 5-monophosphate (CMP) (IspF). The chain is Bifunctional enzyme IspD/IspF from Wolinella succinogenes (strain ATCC 29543 / DSM 1740 / CCUG 13145 / JCM 31913 / LMG 7466 / NCTC 11488 / FDC 602W) (Vibrio succinogenes).